A 275-amino-acid polypeptide reads, in one-letter code: Putative pyruvate, phosphate dikinase regulatory protein (275 aa).

151–158 (GVSRTSKT) is a binding site for ADP.

It belongs to the pyruvate, phosphate/water dikinase regulatory protein family. PDRP subfamily.

The catalysed reaction is N(tele)-phospho-L-histidyl/L-threonyl-[pyruvate, phosphate dikinase] + ADP = N(tele)-phospho-L-histidyl/O-phospho-L-threonyl-[pyruvate, phosphate dikinase] + AMP + H(+). It carries out the reaction N(tele)-phospho-L-histidyl/O-phospho-L-threonyl-[pyruvate, phosphate dikinase] + phosphate + H(+) = N(tele)-phospho-L-histidyl/L-threonyl-[pyruvate, phosphate dikinase] + diphosphate. Bifunctional serine/threonine kinase and phosphorylase involved in the regulation of the pyruvate, phosphate dikinase (PPDK) by catalyzing its phosphorylation/dephosphorylation. The polypeptide is Putative pyruvate, phosphate dikinase regulatory protein (Rhodospirillum rubrum (strain ATCC 11170 / ATH 1.1.1 / DSM 467 / LMG 4362 / NCIMB 8255 / S1)).